Consider the following 298-residue polypeptide: Ornithine carbamoyltransferase (298 aa).

Carbamoyl phosphate is bound by residues 50-53, Q77, R101, and 128-131; these read STRT and HPCQ. L-ornithine contacts are provided by residues N159, D216, and 220–221; that span reads SM. Carbamoyl phosphate-binding positions include 256 to 257 and R284; that span reads CL.

Belongs to the aspartate/ornithine carbamoyltransferase superfamily. OTCase family.

Its subcellular location is the cytoplasm. The enzyme catalyses carbamoyl phosphate + L-ornithine = L-citrulline + phosphate + H(+). It functions in the pathway amino-acid biosynthesis; L-arginine biosynthesis; L-arginine from L-ornithine and carbamoyl phosphate: step 1/3. In terms of biological role, reversibly catalyzes the transfer of the carbamoyl group from carbamoyl phosphate (CP) to the N(epsilon) atom of ornithine (ORN) to produce L-citrulline. The chain is Ornithine carbamoyltransferase from Methylococcus capsulatus (strain ATCC 33009 / NCIMB 11132 / Bath).